The following is a 450-amino-acid chain: Chitobiosyldiphosphodolichol beta-mannosyltransferase (450 aa).

Topologically, residues 1–13 (MSWIQIPWSWVVT) are lumenal. A helical transmembrane segment spans residues 14-34 (LIVTYLSLPLIIYYLVPYIFY). The Cytoplasmic portion of the chain corresponds to 35–106 (GNKSSKKRII…PTLTLQGNKR (72 aa)). The helical intramembrane region spans 107–127 (SIIFLVKKVLFQVSAIIAQLW). Topologically, residues 128-450 (ELRGSNYMLI…SAMQELKLVA (323 aa)) are cytoplasmic.

It belongs to the glycosyltransferase group 1 family.

The protein localises to the endoplasmic reticulum membrane. It carries out the reaction an N,N'-diacetylchitobiosyl-diphospho-di-trans,poly-cis-dolichol + GDP-alpha-D-mannose = a beta-D-Man-(1-&gt;4)-beta-D-GlcNAc-(1-&gt;4)-alpha-D-GlcNAc-diphospho-di-trans,poly-cis-dolichol + GDP + H(+). Its pathway is protein modification; protein glycosylation. In terms of biological role, participates in the formation of the lipid-linked precursor oligosaccharide for N-glycosylation. Involved in assembling the dolichol-pyrophosphate-GlcNAc(2)-Man(5) intermediate on the cytoplasmic surface of the ER. The chain is Chitobiosyldiphosphodolichol beta-mannosyltransferase (ALG1) from Candida glabrata (strain ATCC 2001 / BCRC 20586 / JCM 3761 / NBRC 0622 / NRRL Y-65 / CBS 138) (Yeast).